The primary structure comprises 358 residues: Uroporphyrinogen decarboxylase (358 aa).

Substrate is bound by residues 27-31, Asp77, Tyr154, Ser209, and His327; that span reads RQAGR.

The protein belongs to the uroporphyrinogen decarboxylase family. As to quaternary structure, homodimer.

The protein localises to the cytoplasm. It catalyses the reaction uroporphyrinogen III + 4 H(+) = coproporphyrinogen III + 4 CO2. Its pathway is porphyrin-containing compound metabolism; protoporphyrin-IX biosynthesis; coproporphyrinogen-III from 5-aminolevulinate: step 4/4. In terms of biological role, catalyzes the decarboxylation of four acetate groups of uroporphyrinogen-III to yield coproporphyrinogen-III. In Azoarcus sp. (strain BH72), this protein is Uroporphyrinogen decarboxylase.